Consider the following 78-residue polypeptide: Large ribosomal subunit protein bL28 (78 aa).

A disordered region spans residues 1–33 (MARKDDVTGEGPVTGNSVSDSNQKTNRRFKRNL). The segment covering 14-24 (TGNSVSDSNQK) has biased composition (polar residues).

This sequence belongs to the bacterial ribosomal protein bL28 family.

This Salinibacter ruber (strain DSM 13855 / M31) protein is Large ribosomal subunit protein bL28.